The chain runs to 33 residues: Rugosin-A (33 aa).

The cysteines at positions 27 and 33 are disulfide-linked.

This sequence belongs to the frog skin active peptide (FSAP) family. Brevinin subfamily. As to expression, expressed by the skin glands.

It localises to the secreted. In terms of biological role, has antibacterial activity against Gram-positive bacteria. The sequence is that of Rugosin-A from Glandirana rugosa (Japanese wrinkled frog).